The sequence spans 302 residues: Nucleotide-binding protein Bcenmc03_2806 (302 aa).

8–15 (GISGSGKS) provides a ligand contact to ATP. A GTP-binding site is contributed by 57 to 60 (DARS).

The protein belongs to the RapZ-like family.

Displays ATPase and GTPase activities. This Burkholderia orbicola (strain MC0-3) protein is Nucleotide-binding protein Bcenmc03_2806.